The following is a 56-amino-acid chain: Meucin-25 (56 aa).

The N-terminal stretch at 1 to 31 is a signal peptide; that stretch reads MFRIEYSLVQLLLRNVTIPLLLIIQMHIMSS.

The protein belongs to the non-disulfide-bridged peptide (NDBP) superfamily. Antimalarial peptide (group 5) family. As to expression, expressed by the venom gland.

The protein localises to the secreted. Functionally, this synthetic cationic peptide inhibits the development of Plasmodium berghei ookinetes, kills intraerythrocytic P.falciparum, and is cytotoxic to the Drosophila S2 cell at micromolar concentrations. No antibacterial, antifungal and hemolytic activities have been found at micromolar concentrations. This Mesobuthus eupeus (Lesser Asian scorpion) protein is Meucin-25.